The primary structure comprises 114 residues: Protein ORF3 (114 aa).

Hydrophobic regions lie at residues 6-24 (WALG…CCSR) and 33-53 (AVVG…GLIL). Positions 28-68 (VSRLAAVVGGAAAVPAVVSGVTGLILSPSQSPIFIQPTPSP) are interaction with host HPX. Positions 48 to 72 (VTGLILSPSQSPIFIQPTPSPRMSP) are interaction with the capsid protein. Ser71 carries the phosphoserine; by host modification. Residues 72-114 (PLRPGLDLVFANPSDHSAPLGATRPSAPPLPHVVDLPQLGPRR) are homodimerization, and interaction with host AMBP/bikunin. The disordered stretch occupies residues 85 to 114 (SDHSAPLGATRPSAPPLPHVVDLPQLGPRR). Residues 95–104 (RPSAPPLPHV) are interaction with host SRC, HCK, FYN, PIK3R3 and GRB2. Positions 96 to 99 (PSAP) match the PTAP/PSAP motif motif.

Belongs to the hepevirus ORF3 protein family. As to quaternary structure, forms homooligomers. Interacts with host SRC, HCK, FYN, PIK3R3 and GRB2 (via SH3 domain); binding does not activate the kinases. Interacts with host AMBP/bikunin and AMBP/alpha-1-microglobulin peptides. Interacts with host HPX/hemopexin. Interacts (when phosphorylated) with capsid protein ORF2. Interacts with host TSG101; this interaction plays a role in viral release from the host cell. Interacts with host SIRPA; this interaction down-regulates the phosphorylation of host IRF3. Palmitoylated in the N-terminus.

It is found in the host endoplasmic reticulum membrane. The protein localises to the host cytoplasm. Its subcellular location is the host cytoskeleton. It localises to the virion. The protein resides in the host cell membrane. Small multifunctional phosphoprotein involved in virion morphogenesis, egress and counteracting host innate immunity. Plays critical roles in the final steps of viral release by interacting with host TSG101, a member of the vacuolar protein-sorting pathway and using other cellular host proteins involved in vesicle formation pathway. Also acts as a viroporin and forms ion conductive pores allowing viral particle release. Impairs the generation of type I interferon by down-regulating host TLR3 and TLR7 as well as their downstream signaling pathways. Down-regulates the phosphorylation of host IRF3 via the interaction with host SIRP-alpha, thereby inhibiting IFN-I expression. Interacts with host microtubules. This chain is Protein ORF3, found in Hepatitis E virus genotype 1 (isolate Human/India/Hyderabad) (HEV-1).